Consider the following 661-residue polypeptide: UvrABC system protein B (661 aa).

The Helicase ATP-binding domain occupies 25–182 (AGLSSKKRSQ…NDLINLQYER (158 aa)). Position 38-45 (38-45 (GITGSGKT)) interacts with ATP. Positions 91-114 (YYDYYQPEAYIARTDTFIEKDSSI) match the Beta-hairpin motif. The Helicase C-terminal domain occupies 430–592 (QVEDLISEIQ…IIPKTINRAI (163 aa)). Positions 621–656 (KTHIDKLKKEMLKAASNLEFEQAVKLRDQLKTLEEA) constitute a UVR domain.

Belongs to the UvrB family. In terms of assembly, forms a heterotetramer with UvrA during the search for lesions. Interacts with UvrC in an incision complex.

It localises to the cytoplasm. Its function is as follows. The UvrABC repair system catalyzes the recognition and processing of DNA lesions. A damage recognition complex composed of 2 UvrA and 2 UvrB subunits scans DNA for abnormalities. Upon binding of the UvrA(2)B(2) complex to a putative damaged site, the DNA wraps around one UvrB monomer. DNA wrap is dependent on ATP binding by UvrB and probably causes local melting of the DNA helix, facilitating insertion of UvrB beta-hairpin between the DNA strands. Then UvrB probes one DNA strand for the presence of a lesion. If a lesion is found the UvrA subunits dissociate and the UvrB-DNA preincision complex is formed. This complex is subsequently bound by UvrC and the second UvrB is released. If no lesion is found, the DNA wraps around the other UvrB subunit that will check the other stand for damage. The chain is UvrABC system protein B from Rickettsia rickettsii (strain Sheila Smith).